We begin with the raw amino-acid sequence, 255 residues long: Thiazole synthase (255 aa).

Lysine 96 functions as the Schiff-base intermediate with DXP in the catalytic mechanism. 1-deoxy-D-xylulose 5-phosphate is bound by residues glycine 157, 183 to 184 (AG), and 205 to 206 (NT).

It belongs to the ThiG family. In terms of assembly, homotetramer. Forms heterodimers with either ThiH or ThiS.

Its subcellular location is the cytoplasm. The catalysed reaction is [ThiS sulfur-carrier protein]-C-terminal-Gly-aminoethanethioate + 2-iminoacetate + 1-deoxy-D-xylulose 5-phosphate = [ThiS sulfur-carrier protein]-C-terminal Gly-Gly + 2-[(2R,5Z)-2-carboxy-4-methylthiazol-5(2H)-ylidene]ethyl phosphate + 2 H2O + H(+). The protein operates within cofactor biosynthesis; thiamine diphosphate biosynthesis. In terms of biological role, catalyzes the rearrangement of 1-deoxy-D-xylulose 5-phosphate (DXP) to produce the thiazole phosphate moiety of thiamine. Sulfur is provided by the thiocarboxylate moiety of the carrier protein ThiS. In vitro, sulfur can be provided by H(2)S. The polypeptide is Thiazole synthase (Bacillus licheniformis (strain ATCC 14580 / DSM 13 / JCM 2505 / CCUG 7422 / NBRC 12200 / NCIMB 9375 / NCTC 10341 / NRRL NRS-1264 / Gibson 46)).